A 120-amino-acid chain; its full sequence is Large ribosomal subunit protein uL24 (120 aa).

The protein belongs to the universal ribosomal protein uL24 family. In terms of assembly, part of the 50S ribosomal subunit.

In terms of biological role, one of two assembly initiator proteins, it binds directly to the 5'-end of the 23S rRNA, where it nucleates assembly of the 50S subunit. Located at the polypeptide exit tunnel on the outside of the subunit. The chain is Large ribosomal subunit protein uL24 from Archaeoglobus fulgidus (strain ATCC 49558 / DSM 4304 / JCM 9628 / NBRC 100126 / VC-16).